Reading from the N-terminus, the 443-residue chain is Glutamine synthetase (443 aa).

The GS beta-grasp domain maps to valine 11–glutamate 97. The 341-residue stretch at proline 103–valine 443 folds into the GS catalytic domain. Glutamate 126 and glutamate 128 together coordinate Mg(2+). Glutamate 176 is an ATP binding site. Mg(2+) is bound by residues glutamate 181 and glutamate 188. Residue glycine 233 coordinates L-glutamate. Histidine 237 lines the Mg(2+) pocket. Residues histidine 239 to serine 241 and serine 241 each bind ATP. L-glutamate is bound by residues arginine 287, glutamate 293, and arginine 305. ATP-binding residues include arginine 305 and arginine 310. Glutamate 322 is a binding site for Mg(2+). Residue arginine 324 participates in L-glutamate binding.

It belongs to the glutamine synthetase family. In terms of assembly, oligomer of 12 subunits arranged in the form of two hexagons. The cofactor is Mg(2+). It depends on Mn(2+) as a cofactor.

It localises to the cytoplasm. The catalysed reaction is L-glutamate + NH4(+) + ATP = L-glutamine + ADP + phosphate + H(+). The enzyme catalyses hydroxylamine + L-glutamate + ATP = L-glutamine hydroxamate + ADP + phosphate. The activity of this enzyme is not controlled by adenylation. Its function is as follows. Carries out the ATP-dependent synthesis of glutamine from ammonium nitrogen and glutamate. Exhibits both L-gamma-glutamylhydroxamate synthetase and gamma-glutamyltransferase activities when using hydroxylamine as substrate; in fact, the enzyme possesses low biosynthetic activity, suggesting that the reaction is biased towards the degradation of glutamine under ammonia-rich conditions. Might play some role in ammonia assimilation under ammonia-starvation conditions. Can also use GTP instead of ATP in the synthetase reaction, but not CTP or UTP. In Thermococcus kodakarensis (strain ATCC BAA-918 / JCM 12380 / KOD1) (Pyrococcus kodakaraensis (strain KOD1)), this protein is Glutamine synthetase.